The primary structure comprises 324 residues: D-alanine--D-alanine ligase (324 aa).

An ATP-grasp domain is found at 121–321; it reads NQYLKAFGVR…IKDVMTDIIE (201 aa). An ATP-binding site is contributed by 149–204; it reads VEKIGLPCFIKPNLGGSSFGVTKVKTREQIQPAIAKAFSEAEEVMIEAFMGGTELT. Mg(2+) is bound by residues Asp275, Glu288, and Asn290.

Belongs to the D-alanine--D-alanine ligase family. It depends on Mg(2+) as a cofactor. Mn(2+) serves as cofactor.

It is found in the cytoplasm. The catalysed reaction is 2 D-alanine + ATP = D-alanyl-D-alanine + ADP + phosphate + H(+). It participates in cell wall biogenesis; peptidoglycan biosynthesis. Functionally, cell wall formation. This is D-alanine--D-alanine ligase from Bacteroides fragilis (strain ATCC 25285 / DSM 2151 / CCUG 4856 / JCM 11019 / LMG 10263 / NCTC 9343 / Onslow / VPI 2553 / EN-2).